Here is a 282-residue protein sequence, read N- to C-terminus: tRNA pseudouridine synthase A (282 aa).

Residue Asp53 is the Nucleophile of the active site. Residue Tyr119 coordinates substrate.

Belongs to the tRNA pseudouridine synthase TruA family. In terms of assembly, homodimer.

It catalyses the reaction uridine(38/39/40) in tRNA = pseudouridine(38/39/40) in tRNA. Formation of pseudouridine at positions 38, 39 and 40 in the anticodon stem and loop of transfer RNAs. This chain is tRNA pseudouridine synthase A, found in Corynebacterium efficiens (strain DSM 44549 / YS-314 / AJ 12310 / JCM 11189 / NBRC 100395).